Consider the following 386-residue polypeptide: Galactokinase (386 aa).

Residue 35–38 (EHTD) participates in substrate binding. ATP-binding positions include Ser-69 and 125-131 (GAGLSSS). Ser-131 and Glu-163 together coordinate Mg(2+). The active-site Proton acceptor is the Asp-175. Tyr-224 provides a ligand contact to substrate.

It belongs to the GHMP kinase family. GalK subfamily.

Its subcellular location is the cytoplasm. It catalyses the reaction alpha-D-galactose + ATP = alpha-D-galactose 1-phosphate + ADP + H(+). It functions in the pathway carbohydrate metabolism; galactose metabolism. Functionally, catalyzes the transfer of the gamma-phosphate of ATP to D-galactose to form alpha-D-galactose-1-phosphate (Gal-1-P). In Vibrio vulnificus (strain CMCP6), this protein is Galactokinase.